The primary structure comprises 204 residues: Protein GET1 (204 aa).

At 1–4 the chain is on the lumenal side; that stretch reads MPSL. A helical transmembrane segment spans residues 5–24; that stretch reads LLIIFVTELVVQLVNTLGAT. Residues 25 to 110 are Cytoplasmic-facing; the sequence is TINDLLWRIY…KFDRTLTTTR (86 aa). A coiled-coil region spans residues 72–107; the sequence is AKWAKLRRQHDKLLEDLEKKKASLEAARTKFDRTLT. A helical membrane pass occupies residues 111–131; it reads TVSTRSVQWFLPFWYSKEPMF. Over 132 to 155 the chain is Lumenal; that stretch reads WLPYGWFPYYVEWFASFPRAPMGS. Residues 156-172 form a helical membrane-spanning segment; the sequence is VSIVVWQWACTAVIALM. The Cytoplasmic segment spans residues 173 to 204; sequence IEAATAALVYVAAKQSQKIRQPVPAQSEKKDS.

This sequence belongs to the WRB/GET1 family. As to quaternary structure, interacts with GET3.

Its subcellular location is the endoplasmic reticulum membrane. In terms of biological role, required for the post-translational delivery of tail-anchored (TA) proteins to the endoplasmic reticulum. Acts as a membrane receptor for soluble GET3, which recognizes and selectively binds the transmembrane domain of TA proteins in the cytosol. The protein is Protein GET1 of Podospora anserina (strain S / ATCC MYA-4624 / DSM 980 / FGSC 10383) (Pleurage anserina).